The chain runs to 283 residues: Protease HtpX homolog (283 aa).

The next 2 membrane-spanning stretches (helical) occupy residues T7–G27 and Q29–S49. H131 is a binding site for Zn(2+). E132 is a catalytic residue. Residue H135 participates in Zn(2+) binding. The next 2 membrane-spanning stretches (helical) occupy residues I146–G166 and I177–I197. E202 contacts Zn(2+).

Belongs to the peptidase M48B family. The cofactor is Zn(2+).

Its subcellular location is the cell inner membrane. This is Protease HtpX homolog from Methylibium petroleiphilum (strain ATCC BAA-1232 / LMG 22953 / PM1).